The following is a 646-amino-acid chain: ATP-dependent zinc metalloprotease FtsH (646 aa).

Residues 1–27 (MTNNQTDRPRPPGPESRRFDNNDKNNR) form a disordered region. The Cytoplasmic segment spans residues 1 to 35 (MTNNQTDRPRPPGPESRRFDNNDKNNRNRWGPIPS). Positions 7-26 (DRPRPPGPESRRFDNNDKNN) are enriched in basic and acidic residues. Residues 36-56 (WAWIVLIVALLLNWLVAPILF) traverse the membrane as a helical segment. The Extracellular segment spans residues 57–144 (PEGKGAVSIP…QPESSTRSLL (88 aa)). The helical transmembrane segment at 145–165 (LSILISFGPTILFFLLFLWLI) threads the bilayer. The Cytoplasmic segment spans residues 166–646 (SKAQSSQQGL…GLGEKQPEPA (481 aa)). Position 237-244 (237-244 (GPPGTGKT)) interacts with ATP. Zn(2+) is bound at residue His459. Glu460 is a catalytic residue. Zn(2+) contacts are provided by His463 and Asp535.

This sequence in the central section; belongs to the AAA ATPase family. It in the C-terminal section; belongs to the peptidase M41 family. Homohexamer. It depends on Zn(2+) as a cofactor.

The protein localises to the cell membrane. Acts as a processive, ATP-dependent zinc metallopeptidase for both cytoplasmic and membrane proteins. Plays a role in the quality control of integral membrane proteins. The sequence is that of ATP-dependent zinc metalloprotease FtsH from Thermobaculum terrenum (strain ATCC BAA-798 / CCMEE 7001 / YNP1).